Reading from the N-terminus, the 473-residue chain is Hyaluronidase-2 (473 aa).

Positions 1-20 (MRAGLGPIITLALVLEVAWA) are cleaved as a signal peptide. 2 cysteine pairs are disulfide-bonded: cysteine 47–cysteine 340 and cysteine 211–cysteine 227. Residues asparagine 74 and asparagine 103 are each glycosylated (N-linked (GlcNAc...) asparagine). Catalysis depends on glutamate 135, which acts as the Proton donor. A glycan (N-linked (GlcNAc...) asparagine) is linked at asparagine 357. An EGF-like domain is found at 361–439 (ATQYCSWTQC…YLGWGGEQCQ (79 aa)). 3 cysteine pairs are disulfide-bonded: cysteine 365/cysteine 376, cysteine 370/cysteine 427, and cysteine 429/cysteine 438. Aspartate 448 is lipidated: GPI-anchor amidated aspartate. A propeptide spans 449 to 473 (ASRAWAGAHLASLLGLVAMTLTWTL) (removed in mature form).

Belongs to the glycosyl hydrolase 56 family. Interacts with MST1R.

The protein resides in the cell membrane. It catalyses the reaction Random hydrolysis of (1-&gt;4)-linkages between N-acetyl-beta-D-glucosamine and D-glucuronate residues in hyaluronate.. Its function is as follows. Catalyzes hyaluronan degradation into small fragments that are endocytosed and degraded in lysosomes by HYAL1 and exoglycosidases. Essential for the breakdown of extracellular matrix hyaluronan. The polypeptide is Hyaluronidase-2 (Hyal2) (Rattus norvegicus (Rat)).